The sequence spans 367 residues: Alanine racemase (367 aa).

K40 functions as the Proton acceptor; specific for D-alanine in the catalytic mechanism. Position 40 is an N6-(pyridoxal phosphate)lysine (K40). Substrate is bound at residue R136. Y263 (proton acceptor; specific for L-alanine) is an active-site residue. M310 is a binding site for substrate.

This sequence belongs to the alanine racemase family. It depends on pyridoxal 5'-phosphate as a cofactor.

It carries out the reaction L-alanine = D-alanine. The protein operates within amino-acid biosynthesis; D-alanine biosynthesis; D-alanine from L-alanine: step 1/1. Functionally, catalyzes the interconversion of L-alanine and D-alanine. May also act on other amino acids. This chain is Alanine racemase (alr), found in Streptococcus pneumoniae (strain 70585).